A 186-amino-acid chain; its full sequence is TATA-box-binding protein (186 aa).

Tandem repeats lie at residues 10–86 (IENV…FDKL) and 101–179 (VQNI…VERL).

Belongs to the TBP family.

General factor that plays a role in the activation of archaeal genes transcribed by RNA polymerase. Binds specifically to the TATA box promoter element which lies close to the position of transcription initiation. The chain is TATA-box-binding protein from Haloarcula marismortui (strain ATCC 43049 / DSM 3752 / JCM 8966 / VKM B-1809) (Halobacterium marismortui).